The primary structure comprises 394 residues: F-box protein At2g17830 (394 aa).

The F-box domain maps to 1–47 (MAIMSDLPRDLLAEILSRVPLASLRSVRFTCKKWNDLSKDRSFLKKQ).

In Arabidopsis thaliana (Mouse-ear cress), this protein is F-box protein At2g17830.